Here is a 910-residue protein sequence, read N- to C-terminus: Protein translocase subunit SecA (910 aa).

ATP is bound by residues Gln89, 107–111 (GEGKT), and Asp502. Zn(2+)-binding residues include Cys894, Cys896, Cys905, and His906.

It belongs to the SecA family. In terms of assembly, monomer and homodimer. Part of the essential Sec protein translocation apparatus which comprises SecA, SecYEG and auxiliary proteins SecDF-YajC and YidC. Zn(2+) serves as cofactor.

The protein resides in the cell inner membrane. The protein localises to the cytoplasm. It catalyses the reaction ATP + H2O + cellular proteinSide 1 = ADP + phosphate + cellular proteinSide 2.. Functionally, part of the Sec protein translocase complex. Interacts with the SecYEG preprotein conducting channel. Has a central role in coupling the hydrolysis of ATP to the transfer of proteins into and across the cell membrane, serving both as a receptor for the preprotein-SecB complex and as an ATP-driven molecular motor driving the stepwise translocation of polypeptide chains across the membrane. The chain is Protein translocase subunit SecA from Chelativorans sp. (strain BNC1).